The following is a 185-amino-acid chain: Elongation factor P (185 aa).

Belongs to the elongation factor P family.

Its subcellular location is the cytoplasm. Its pathway is protein biosynthesis; polypeptide chain elongation. Involved in peptide bond synthesis. Stimulates efficient translation and peptide-bond synthesis on native or reconstituted 70S ribosomes in vitro. Probably functions indirectly by altering the affinity of the ribosome for aminoacyl-tRNA, thus increasing their reactivity as acceptors for peptidyl transferase. This chain is Elongation factor P, found in Nitratidesulfovibrio vulgaris (strain DSM 19637 / Miyazaki F) (Desulfovibrio vulgaris).